A 92-amino-acid polypeptide reads, in one-letter code: Envelope glycoprotein J (92 aa).

Positions 1 to 22 (MDRYAVRTWGIVGILGCAAVGA) are cleaved as a signal peptide. Topologically, residues 23 to 49 (APTGPASDTTNATARLPTHPPLIRSGG) are extracellular. An N-linked (GlcNAc...) asparagine; by host glycan is attached at N33. A helical membrane pass occupies residues 50–70 (FAVPLIVGGLCLMILGMACLL). Residues 71-92 (EVLRRLGRELARCCPHAGQFAP) lie on the Cytoplasmic side of the membrane.

This sequence belongs to the alphaherpesvirinae glycoprotein J family.

Its subcellular location is the host Golgi apparatus membrane. The protein localises to the host endoplasmic reticulum membrane. The protein resides in the host endosome membrane. Functionally, functions as an activator of viral protein expression and virus production. In turn, promotes cell-to-cell spread as well as syncytia formation. This is Envelope glycoprotein J (gJ) from Homo sapiens (Human).